The following is a 178-amino-acid chain: MDQEPIPSSLEDNPQFKEETSLQKFRRRFKEEPLIPLGCAATSYALYRAYRSMKAGDSVEMNKMFRARIYAQFFTLIAVVAGGMYFKTERQQRREFEKMVEQRKAQEKRDAWLRELEVRDKEDKDWRERHAAMEAAAKEAGKRKSVPEQDAARSAIEPADEKSIGVLAAVRELLARQN.

One can recognise an HIG1 domain in the interval 6–97; that stretch reads IPSSLEDNPQ…TERQQRREFE (92 aa). The next 2 membrane-spanning stretches (helical) occupy residues 33-49 and 69-86; these read PLIP…LYRA and IYAQ…GMYF. The segment covering 136-151 has biased composition (basic and acidic residues); that stretch reads AAKEAGKRKSVPEQDA. The interval 136 to 157 is disordered; sequence AAKEAGKRKSVPEQDAARSAIE.

The protein belongs to the RCF1 family. As to quaternary structure, associates with the respiratory chain complex III/complex IV supercomplex.

Its subcellular location is the mitochondrion membrane. Cytochrome c oxidase subunit which plays a role in assembly of respiratory supercomplexes. This is Respiratory supercomplex factor 1, mitochondrial (rcf1) from Aspergillus clavatus (strain ATCC 1007 / CBS 513.65 / DSM 816 / NCTC 3887 / NRRL 1 / QM 1276 / 107).